Consider the following 382-residue polypeptide: MNLKEKTRALFAEIFGYPATHTIQAPGRVNLIGEHTDYNDGFVLPCAIDYQTVISCAPRDDRTVRVIAADYDNQVDEFSLDAPIVTHDSQQWSNYVRGVVKHLQQRNNAFGGVDMVISGNVPQGAGLSSSASLEVAVGTVFQQLYHLPLDGAQIALNGQEAENQFVGCNCGIMDQLISALGKKDHALLIDCRTLGAKAVSMPKGVAVVIINSNFKRTLVGSEYNTRREQCETGARFFQQPALRDVSLEAFNAVASELDPVVAKRVRHVLSENARTVEAASALEKGDLQRMGQLMAESHASMRDDFEITVPQIDTLVDIVKATIGDQGGVRMTGGGFGGCVVALIPEDLVPAVQQAVAQQYEAKTGIKETFYVCKPSQGAGQC.

34–37 (EHTD) provides a ligand contact to substrate. 124–130 (GAGLSSS) serves as a coordination point for ATP. Residues S130 and E162 each contribute to the Mg(2+) site. The Proton acceptor role is filled by D174. Residue Y223 coordinates substrate.

The protein belongs to the GHMP kinase family. GalK subfamily.

It is found in the cytoplasm. The catalysed reaction is alpha-D-galactose + ATP = alpha-D-galactose 1-phosphate + ADP + H(+). It participates in carbohydrate metabolism; galactose metabolism. Functionally, catalyzes the transfer of the gamma-phosphate of ATP to D-galactose to form alpha-D-galactose-1-phosphate (Gal-1-P). The sequence is that of Galactokinase from Salmonella typhi.